The following is a 277-amino-acid chain: Large ribosomal subunit protein uL2 (277 aa).

Composition is skewed to basic residues over residues 210–219 (RARWAGKRPQ) and 259–277 (TRSKKARSNKFIVRSRNKK). The disordered stretch occupies residues 210-277 (RARWAGKRPQ…KFIVRSRNKK (68 aa)).

Belongs to the universal ribosomal protein uL2 family. In terms of assembly, part of the 50S ribosomal subunit. Forms a bridge to the 30S subunit in the 70S ribosome.

Functionally, one of the primary rRNA binding proteins. Required for association of the 30S and 50S subunits to form the 70S ribosome, for tRNA binding and peptide bond formation. It has been suggested to have peptidyltransferase activity; this is somewhat controversial. Makes several contacts with the 16S rRNA in the 70S ribosome. The protein is Large ribosomal subunit protein uL2 of Ligilactobacillus salivarius (strain UCC118) (Lactobacillus salivarius).